A 437-amino-acid chain; its full sequence is Nicotinate phosphoribosyltransferase (437 aa).

A Phosphohistidine; by autocatalysis modification is found at H231.

This sequence belongs to the NAPRTase family. Post-translationally, transiently phosphorylated on a His residue during the reaction cycle. Phosphorylation strongly increases the affinity for substrates and increases the rate of nicotinate D-ribonucleotide production. Dephosphorylation regenerates the low-affinity form of the enzyme, leading to product release.

The catalysed reaction is nicotinate + 5-phospho-alpha-D-ribose 1-diphosphate + ATP + H2O = nicotinate beta-D-ribonucleotide + ADP + phosphate + diphosphate. It functions in the pathway cofactor biosynthesis; NAD(+) biosynthesis; nicotinate D-ribonucleotide from nicotinate: step 1/1. Catalyzes the synthesis of beta-nicotinate D-ribonucleotide from nicotinate and 5-phospho-D-ribose 1-phosphate at the expense of ATP. This Vibrio vulnificus (strain CMCP6) protein is Nicotinate phosphoribosyltransferase.